A 304-amino-acid chain; its full sequence is Virulence protein VirA (304 aa).

Functionally, could be involved in the biosynthesis of a major surface antigen important for virulence. This Vibrio anguillarum (strain ATCC 68554 / 775) (Listonella anguillarum) protein is Virulence protein VirA (virA).